Consider the following 179-residue polypeptide: Large ribosomal subunit protein uL5 (179 aa).

It belongs to the universal ribosomal protein uL5 family. Part of the 50S ribosomal subunit; part of the 5S rRNA/L5/L18/L25 subcomplex. Contacts the 5S rRNA and the P site tRNA. Forms a bridge to the 30S subunit in the 70S ribosome.

Its function is as follows. This is one of the proteins that bind and probably mediate the attachment of the 5S RNA into the large ribosomal subunit, where it forms part of the central protuberance. In the 70S ribosome it contacts protein S13 of the 30S subunit (bridge B1b), connecting the 2 subunits; this bridge is implicated in subunit movement. Contacts the P site tRNA; the 5S rRNA and some of its associated proteins might help stabilize positioning of ribosome-bound tRNAs. This is Large ribosomal subunit protein uL5 from Enterobacter sp. (strain 638).